Here is a 69-residue protein sequence, read N- to C-terminus: U5-agatoxin-Ao1a (69 aa).

The first 20 residues, 1–20 (MRTIISLLLLSAMVFAVIEA), serve as a signal peptide directing secretion. The propeptide occupies 21–34 (ISLEEGLQLFEGER). 2 cysteine pairs are disulfide-bonded: cysteine 36/cysteine 52 and cysteine 43/cysteine 57.

This sequence belongs to the neurotoxin 01 (U2-agtx) family. In terms of processing, does not contain a cysteine at position 61 which disrupts the cysteine framework. As to expression, expressed by the venom gland.

It localises to the secreted. The chain is U5-agatoxin-Ao1a from Agelena orientalis (Funnel-web spider).